Reading from the N-terminus, the 286-residue chain is Pantothenate synthetase (286 aa).

Residue 30–37 (MGNLHSGH) coordinates ATP. The Proton donor role is filled by His-37. Gln-61 lines the (R)-pantoate pocket. Beta-alanine is bound at residue Gln-61. 149–152 (GQKD) provides a ligand contact to ATP. Gln-155 lines the (R)-pantoate pocket. ATP-binding positions include Val-178 and 186-189 (LSSR).

It belongs to the pantothenate synthetase family. As to quaternary structure, homodimer.

The protein resides in the cytoplasm. It carries out the reaction (R)-pantoate + beta-alanine + ATP = (R)-pantothenate + AMP + diphosphate + H(+). The protein operates within cofactor biosynthesis; (R)-pantothenate biosynthesis; (R)-pantothenate from (R)-pantoate and beta-alanine: step 1/1. Catalyzes the condensation of pantoate with beta-alanine in an ATP-dependent reaction via a pantoyl-adenylate intermediate. This chain is Pantothenate synthetase, found in Pseudomonas fluorescens (strain ATCC BAA-477 / NRRL B-23932 / Pf-5).